The following is a 547-amino-acid chain: Mucin-13 (547 aa).

The segment covering 1–210 has biased composition (low complexity); that stretch reads MSQSSGGTST…TVTSSSSTGS (210 aa). The tract at residues 1–218 is disordered; it reads MSQSSGGTST…GSNDPCNSNP (218 aa). The 40-residue stretch at 210-249 folds into the EGF-like 1 domain; sequence SNDPCNSNPCKSPASCVKLYDSYFCLCLEGYYYNNSSSCV. Cystine bridges form between cysteine 214–cysteine 225, cysteine 219–cysteine 234, and cysteine 236–cysteine 248. Asparagine 243, asparagine 244, and asparagine 263 each carry an N-linked (GlcNAc...) asparagine glycan. Residues 250-366 enclose the SEA domain; sequence KGTTFPGEIG…ERYFQQDRCD (117 aa). EGF-like domains are found at residues 361-401 and 401-441; these read QQDR…PFCV and VAPT…GKCE. 5 disulfide bridges follow: cysteine 365-cysteine 378, cysteine 370-cysteine 384, cysteine 386-cysteine 400, cysteine 409-cysteine 427, and cysteine 429-cysteine 440. Residues 459 to 479 form a helical membrane-spanning segment; that stretch reads ILTIVGTIAGAFILILLIVFI. The Cytoplasmic portion of the chain corresponds to 480 to 547; it reads VSMRSKNKKK…NHRSMPRPDY (68 aa). Positions 525–547 are disordered; that stretch reads KTGVPSQTSNPYANHRSMPRPDY.

Homodimer of beta subunits. In terms of processing, cleaved into two subunits, alpha and beta, probably between the first EGF domain and the SEA domain. Beta subunit contains the cytoplasmic tail and alpha subunit the extracellular tail. The homooligomerization into dimers is dependent on intrachain disulfide bonds. Highly glycosylated.

The protein resides in the cell membrane. Its subcellular location is the secreted. Epithelial and hemopoietic transmembrane mucin that may play a role in cell signaling. The polypeptide is Mucin-13 (Muc13) (Rattus norvegicus (Rat)).